A 140-amino-acid chain; its full sequence is Nucleoside diphosphate kinase (140 aa).

ATP-binding residues include lysine 11, phenylalanine 59, arginine 87, threonine 93, arginine 104, and asparagine 114. Histidine 117 functions as the Pros-phosphohistidine intermediate in the catalytic mechanism.

The protein belongs to the NDK family. Homotetramer. Mg(2+) is required as a cofactor.

The protein localises to the cytoplasm. It catalyses the reaction a 2'-deoxyribonucleoside 5'-diphosphate + ATP = a 2'-deoxyribonucleoside 5'-triphosphate + ADP. The catalysed reaction is a ribonucleoside 5'-diphosphate + ATP = a ribonucleoside 5'-triphosphate + ADP. Its function is as follows. Major role in the synthesis of nucleoside triphosphates other than ATP. The ATP gamma phosphate is transferred to the NDP beta phosphate via a ping-pong mechanism, using a phosphorylated active-site intermediate. The protein is Nucleoside diphosphate kinase of Hyphomonas neptunium (strain ATCC 15444).